Reading from the N-terminus, the 227-residue chain is PKHD-type hydroxylase BPSS1206 (227 aa).

The region spanning 78-178 is the Fe2OG dioxygenase domain; that stretch reads KVFPPLFNRY…RVASFFWIQS (101 aa). 3 residues coordinate Fe cation: His96, Asp98, and His159. Arg169 is a binding site for 2-oxoglutarate.

Fe(2+) is required as a cofactor. The cofactor is L-ascorbate.

The protein is PKHD-type hydroxylase BPSS1206 of Burkholderia pseudomallei (strain K96243).